The primary structure comprises 425 residues: Neuromedin-U receptor 1 (425 aa).

At 1 to 59 (MTPPCLNCSFFPGQLSPNASTGLLSCNDSEFKEHFDLEDLNLTHEDLRLKYLGPQQVKQ) the chain is on the extracellular side. N-linked (GlcNAc...) asparagine glycosylation occurs at N41. A helical transmembrane segment spans residues 60 to 80 (FLPICVTYLLIFVVGTLGNGL). Topologically, residues 81–96 (TCTVILRQKAMHTPTN) are cytoplasmic. Residues 97-117 (FYLFSLAVSDLLVLLVGLPLE) traverse the membrane as a helical segment. The Extracellular segment spans residues 118–137 (LYEMQHNYPFQLGAGGCYFR). Cysteines 134 and 219 form a disulfide. The helical transmembrane segment at 138-158 (ILLLETVCLASVLNVTALSVE) threads the bilayer. The Cytoplasmic segment spans residues 159–181 (RYVAVVHPLQAKSVMTRTHVRRM). Residues 182–202 (LGAIWVFAILFSLPNTSLHGL) traverse the membrane as a helical segment. The Extracellular portion of the chain corresponds to 203-235 (SPLYVPCRGPVPDSVTCTLVRPQFFYKLVIQTT). A helical membrane pass occupies residues 236–256 (ILLFFCLPMVTISVLYLLIGL). Residues 257–294 (RLRRERILLQEEVKGRISAAARQASHRSIQLRDRERRQ) are Cytoplasmic-facing. Residues 295 to 315 (VTKMLIALVIVFGTCWVPFHA) traverse the membrane as a helical segment. The Extracellular portion of the chain corresponds to 316 to 331 (DRLMWSMVSHWTDGLR). A helical transmembrane segment spans residues 332-352 (LAFQSVHLASGVFLYLGSAAN). At 353–425 (PVLYNLMSTR…GCEQETDPPE (73 aa)) the chain is on the cytoplasmic side. The interval 406–425 (DVPLAENRDPGCEQETDPPE) is disordered.

The protein belongs to the G-protein coupled receptor 1 family. As to expression, highly expressed in the small intestine and lung. Low expression in the central nervous system.

Its subcellular location is the cell membrane. In terms of biological role, receptor for the neuromedin-U and neuromedin-S neuropeptides. This chain is Neuromedin-U receptor 1 (Nmur1), found in Rattus norvegicus (Rat).